The following is a 264-amino-acid chain: GTP cyclohydrolase FolE2 (264 aa).

It belongs to the GTP cyclohydrolase IV family.

It catalyses the reaction GTP + H2O = 7,8-dihydroneopterin 3'-triphosphate + formate + H(+). It participates in cofactor biosynthesis; 7,8-dihydroneopterin triphosphate biosynthesis; 7,8-dihydroneopterin triphosphate from GTP: step 1/1. In terms of biological role, converts GTP to 7,8-dihydroneopterin triphosphate. This Nitratidesulfovibrio vulgaris (strain ATCC 29579 / DSM 644 / CCUG 34227 / NCIMB 8303 / VKM B-1760 / Hildenborough) (Desulfovibrio vulgaris) protein is GTP cyclohydrolase FolE2.